The primary structure comprises 421 residues: Signal recognition particle receptor FtsY (421 aa).

Positions 1–10 (MFSFFRRKKK) are enriched in basic residues. A disordered region spans residues 1–31 (MFSFFRRKKKQETPALEEAQIQETAAKAESE). Residues 228-235 (GINGAGKT), 309-313 (DTAGR), and 373-376 (TKLD) each bind GTP.

The protein belongs to the GTP-binding SRP family. FtsY subfamily. In terms of assembly, part of the signal recognition particle protein translocation system, which is composed of SRP and FtsY. SRP is a ribonucleoprotein composed of Ffh and a 4.5S RNA molecule.

Its subcellular location is the cell inner membrane. The protein resides in the cytoplasm. The catalysed reaction is GTP + H2O = GDP + phosphate + H(+). Its function is as follows. Involved in targeting and insertion of nascent membrane proteins into the cytoplasmic membrane. Acts as a receptor for the complex formed by the signal recognition particle (SRP) and the ribosome-nascent chain (RNC). Interaction with SRP-RNC leads to the transfer of the RNC complex to the Sec translocase for insertion into the membrane, the hydrolysis of GTP by both Ffh and FtsY, and the dissociation of the SRP-FtsY complex into the individual components. In Neisseria meningitidis serogroup A / serotype 4A (strain DSM 15465 / Z2491), this protein is Signal recognition particle receptor FtsY.